We begin with the raw amino-acid sequence, 203 residues long: Sporulation delaying protein C (203 aa).

Positions 1 to 32 (MKSKLLRLLIVSMVTILVFSLVGLSKESSTSA) are cleaved as a signal peptide. Residues 33–140 (KENHTFSGED…KYSSNKVTPS (108 aa)) constitute a propeptide, removed in mature form. A disulfide bridge connects residues C141 and C147. Residues 183-203 (SASNNSDLEAAAAKTLKLIHQ) constitute a propeptide, removed in mature form.

As to quaternary structure, proprotein probably interacts with chaperone CsaA. Production of active SDP (able to induce SdpI and kill cells) is a multi-step process that requires signal peptide cleavage (probably by SipS or SipT) as well as SdpA and SdpB. The disulfide bond is not required for maximum toxicity.

Its subcellular location is the secreted. Produces a 42-residue extracellular sporulation delaying protein (SDP) that collapses the proton motive force (probably both the membrane potential and pH gradient) across the cell membrane, which leads to autolysis; may form a proton channel. Induces the lysis of other B.subtilis cells that have not entered the sporulation pathway, inducing cannibalism to provide a source of nutrients to support sporulation, and at the same time delaying commitment to the energetically expensive and irreversible onset of sporulation. Addition of SDP to liquid cultures halts growth, leads to increased cell permeability and eventually cell lysis in a significant subset of the population, although some cells survive and resume growth after a lag period. Effects of SDP are irreversible within 10 minutes. Addition of SDP to solid cultures induces killing, it is much more effective than SKF (AC O31422). Has antibiotic action against Gram-positive Firmicutes (L.acidophilus, M.megaterium, P.polymyxa, S.aureus, S.epidermidis) but not Actinobacteria M.luteus or Gram-negative P.aeruginosa or K.pneumoniae. SDP induces expression of the sdpR-sdpI operon. Its maturation is dependent on SdpA and SdpB. Also functions as a ligand, binds to SdpI triggering a signal transduction cascade that protects the cell against the toxic effects of its own SDP. This Bacillus subtilis (strain 168) protein is Sporulation delaying protein C.